The chain runs to 395 residues: Acetate kinase 1 (395 aa).

Asparagine 8 contributes to the Mg(2+) binding site. Lysine 15 contacts ATP. Arginine 89 is a substrate binding site. The active-site Proton donor/acceptor is aspartate 146. ATP-binding positions include 206–210 (HIGNG), 283–285 (DMR), and 330–334 (GIGEN). Glutamate 382 is a Mg(2+) binding site.

Belongs to the acetokinase family. As to quaternary structure, homodimer. It depends on Mg(2+) as a cofactor. Mn(2+) serves as cofactor.

It localises to the cytoplasm. It catalyses the reaction acetate + ATP = acetyl phosphate + ADP. It functions in the pathway metabolic intermediate biosynthesis; acetyl-CoA biosynthesis; acetyl-CoA from acetate: step 1/2. Functionally, catalyzes the formation of acetyl phosphate from acetate and ATP. Can also catalyze the reverse reaction. The polypeptide is Acetate kinase 1 (Lactococcus lactis subsp. lactis (strain IL1403) (Streptococcus lactis)).